Consider the following 377-residue polypeptide: MKKVWIGIGIAVIVALFVGINIYRSAAPTSGSAGKEVQTGSVEENEISSTVMVPGTLKFSNEQYVFYEADKGTLEDIKVKEGDKVKKGTALVTYTNEQLSLEKEQNQLTSESNRLQIDQIQEKLKALDSKERELEKQVGKKEAEKQIESERTELQMQKKTAEIELKQTELQRQSLANRVSDLEVKSEIEGTVISVNQEAASKKSDIQEPVIHIGNPKDLVVSGKLSEYDTLKVKKGQKVTLTSDVIQGKTWKGTVSAVGLVPDQQESAAAQGTEQAVQYPLQVKIKGNLPEGKPGFKFIMNIETDKRKANTLPSKAVKKEDDQYYVYTVKDGKAKRVDVKIGEVTDDLTEIKEGLTQDDQVILNPSDQVTDGMEVKS.

The helical transmembrane segment at Lys-3–Tyr-23 threads the bilayer. Residues Thr-95–Glu-187 are a coiled coil.

This sequence belongs to the membrane fusion protein (MFP) (TC 8.A.1) family. In terms of assembly, part of a complex composed of YknX, YknY and YknZ. The complex interacts with YknW.

It is found in the cell membrane. In terms of biological role, part of an unusual four-component transporter, which is required for protection against the killing factor SdpC (sporulation-delaying protein). The chain is Putative efflux system component YknX (yknX) from Bacillus subtilis (strain 168).